The following is a 389-amino-acid chain: Chalcone synthase 1A (389 aa).

Cysteine 164 is a catalytic residue.

This sequence belongs to the thiolase-like superfamily. Chalcone/stilbene synthases family.

It catalyses the reaction (E)-4-coumaroyl-CoA + 3 malonyl-CoA + 3 H(+) = 2',4,4',6'-tetrahydroxychalcone + 3 CO2 + 4 CoA. It participates in secondary metabolite biosynthesis; flavonoid biosynthesis. Its function is as follows. The primary product of this enzyme is 4,2',4',6'-tetrahydroxychalcone (also termed naringenin-chalcone or chalcone) which can under specific conditions spontaneously isomerize into naringenin. The chain is Chalcone synthase 1A (CHS-1A) from Pisum sativum (Garden pea).